A 300-amino-acid polypeptide reads, in one-letter code: MASENKYSFNKLQKRIRRDAGKAIQDFGMIEDGDHIMVCLSGGKDSYTLLDTLLYLQKVAPVRFSLVAVNLDQKQPGFPEHVLPAYLNKLGVDYKIVEEDTYSIVKEKIPEGKTTCSLCSRLRRGILYRTAKELKATKIALGHHRDDMIETLFLNMFHGGKLKSMPPKLASDNGEHVVIRPLAYAREKDIEQYSAAMEFPIIPCNLCGSQENLQRKQIKQMLNGWDKQFPGRIESLFTAMQNVVPSHLADSALFDFKAVTADGVADENGDKAFDTDSFTTNFETEDSPVFASNIPIKHLA.

Positions 41-46 (SGGKDS) match the PP-loop motif motif. Cys-116, Cys-119, and Cys-207 together coordinate [4Fe-4S] cluster.

Belongs to the TtcA family. In terms of assembly, homodimer. The cofactor is Mg(2+). It depends on [4Fe-4S] cluster as a cofactor.

The protein resides in the cytoplasm. It carries out the reaction cytidine(32) in tRNA + S-sulfanyl-L-cysteinyl-[cysteine desulfurase] + AH2 + ATP = 2-thiocytidine(32) in tRNA + L-cysteinyl-[cysteine desulfurase] + A + AMP + diphosphate + H(+). It functions in the pathway tRNA modification. Functionally, catalyzes the ATP-dependent 2-thiolation of cytidine in position 32 of tRNA, to form 2-thiocytidine (s(2)C32). The sulfur atoms are provided by the cysteine/cysteine desulfurase (IscS) system. The chain is tRNA-cytidine(32) 2-sulfurtransferase from Idiomarina loihiensis (strain ATCC BAA-735 / DSM 15497 / L2-TR).